A 97-amino-acid chain; its full sequence is Glutamyl-tRNA(Gln) amidotransferase subunit C (97 aa).

Belongs to the GatC family. As to quaternary structure, heterotrimer of A, B and C subunits.

The catalysed reaction is L-glutamyl-tRNA(Gln) + L-glutamine + ATP + H2O = L-glutaminyl-tRNA(Gln) + L-glutamate + ADP + phosphate + H(+). It catalyses the reaction L-aspartyl-tRNA(Asn) + L-glutamine + ATP + H2O = L-asparaginyl-tRNA(Asn) + L-glutamate + ADP + phosphate + 2 H(+). Its function is as follows. Allows the formation of correctly charged Asn-tRNA(Asn) or Gln-tRNA(Gln) through the transamidation of misacylated Asp-tRNA(Asn) or Glu-tRNA(Gln) in organisms which lack either or both of asparaginyl-tRNA or glutaminyl-tRNA synthetases. The reaction takes place in the presence of glutamine and ATP through an activated phospho-Asp-tRNA(Asn) or phospho-Glu-tRNA(Gln). The sequence is that of Glutamyl-tRNA(Gln) amidotransferase subunit C from Saccharolobus solfataricus (strain ATCC 35092 / DSM 1617 / JCM 11322 / P2) (Sulfolobus solfataricus).